A 153-amino-acid chain; its full sequence is SKP1-like protein 5 (153 aa).

Residues 90 to 153 (MMAANYLNIQ…IREENQWAFQ (64 aa)) are interaction with the F-box domain of F-box proteins.

It belongs to the SKP1 family. In terms of assembly, part of a SCF (SKP1-cullin-F-box) protein ligase complex. Interacts with PP2A13. Restricted to inflorescences, especially in the inflorescence meristem (IM).

It is found in the nucleus. It participates in protein modification; protein ubiquitination. Its function is as follows. Involved in ubiquitination and subsequent proteasomal degradation of target proteins. Together with CUL1, RBX1 and a F-box protein, it forms a SCF E3 ubiquitin ligase complex. The functional specificity of this complex depends on the type of F-box protein. In the SCF complex, it serves as an adapter that links the F-box protein to CUL1. This Arabidopsis thaliana (Mouse-ear cress) protein is SKP1-like protein 5 (ASK5).